A 370-amino-acid polypeptide reads, in one-letter code: Queuine tRNA-ribosyltransferase (370 aa).

Asp-89 acts as the Proton acceptor in catalysis. Substrate-binding positions include 89-93, Asp-143, Gln-187, and Gly-214; that span reads DSGGF. The tract at residues 245-251 is RNA binding; sequence GVGTPED. The active-site Nucleophile is the Asp-264. Positions 269–273 are RNA binding; important for wobble base 34 recognition; the sequence is TRNAR. Zn(2+)-binding residues include Cys-302, Cys-304, Cys-307, and His-333.

Belongs to the queuine tRNA-ribosyltransferase family. As to quaternary structure, homodimer. Within each dimer, one monomer is responsible for RNA recognition and catalysis, while the other monomer binds to the replacement base PreQ1. The cofactor is Zn(2+).

It catalyses the reaction 7-aminomethyl-7-carbaguanine + guanosine(34) in tRNA = 7-aminomethyl-7-carbaguanosine(34) in tRNA + guanine. Its pathway is tRNA modification; tRNA-queuosine biosynthesis. Its function is as follows. Catalyzes the base-exchange of a guanine (G) residue with the queuine precursor 7-aminomethyl-7-deazaguanine (PreQ1) at position 34 (anticodon wobble position) in tRNAs with GU(N) anticodons (tRNA-Asp, -Asn, -His and -Tyr). Catalysis occurs through a double-displacement mechanism. The nucleophile active site attacks the C1' of nucleotide 34 to detach the guanine base from the RNA, forming a covalent enzyme-RNA intermediate. The proton acceptor active site deprotonates the incoming PreQ1, allowing a nucleophilic attack on the C1' of the ribose to form the product. After dissociation, two additional enzymatic reactions on the tRNA convert PreQ1 to queuine (Q), resulting in the hypermodified nucleoside queuosine (7-(((4,5-cis-dihydroxy-2-cyclopenten-1-yl)amino)methyl)-7-deazaguanosine). The chain is Queuine tRNA-ribosyltransferase from Aromatoleum aromaticum (strain DSM 19018 / LMG 30748 / EbN1) (Azoarcus sp. (strain EbN1)).